We begin with the raw amino-acid sequence, 758 residues long: Probable adenosylcobalamin-dependent ribonucleoside-triphosphate reductase (758 aa).

A disulfide bond links Cys194 and Cys459. Residues 233–256 (IIIKGQLPPPPPQQQPQQQQQQHG) are disordered. Residues Cys448 and Glu450 contribute to the active site.

This sequence belongs to the class II ribonucleoside-triphosphate reductase family. Monomer. The cofactor is adenosylcob(III)alamin.

The catalysed reaction is a 2'-deoxyribonucleoside 5'-triphosphate + [thioredoxin]-disulfide + H2O = a ribonucleoside 5'-triphosphate + [thioredoxin]-dithiol. The sequence is that of Probable adenosylcobalamin-dependent ribonucleoside-triphosphate reductase (rtpR) from Dictyostelium discoideum (Social amoeba).